A 238-amino-acid polypeptide reads, in one-letter code: Sugar fermentation stimulation protein homolog (238 aa).

The protein belongs to the SfsA family.

The chain is Sugar fermentation stimulation protein homolog from Klebsiella pneumoniae (strain 342).